We begin with the raw amino-acid sequence, 227 residues long: Probable septum site-determining protein MinC (227 aa).

The protein belongs to the MinC family. Interacts with MinD and FtsZ.

Its function is as follows. Cell division inhibitor that blocks the formation of polar Z ring septums. Rapidly oscillates between the poles of the cell to destabilize FtsZ filaments that have formed before they mature into polar Z rings. Prevents FtsZ polymerization. The protein is Probable septum site-determining protein MinC of Geobacillus thermodenitrificans (strain NG80-2).